The following is a 104-amino-acid chain: MIRKAFVMQVNPDAHEEYQRRHNPIWPELEAVLKSHGAHNYAIYLDKARNLLFAMVEIESEERWNAVASTEICQRWWKYMTDVMPANPDNSPVSSELQEVFYLP.

Tyrosine 18 provides a ligand contact to substrate. Histidine 22 serves as the catalytic Proton donor. Substrate-binding positions include tyrosine 41 and 76 to 77 (WW).

This sequence belongs to the rhamnose mutarotase family. Homodimer.

It is found in the cytoplasm. The enzyme catalyses alpha-L-rhamnose = beta-L-rhamnose. Its pathway is carbohydrate metabolism; L-rhamnose metabolism. Involved in the anomeric conversion of L-rhamnose. This chain is L-rhamnose mutarotase, found in Shigella dysenteriae serotype 1 (strain Sd197).